We begin with the raw amino-acid sequence, 273 residues long: 4-hydroxy-tetrahydrodipicolinate reductase (273 aa).

Residues 8–13 (GACGRM), E34, 102–104 (GTT), and 128–131 (APNM) contribute to the NAD(+) site. The Proton donor/acceptor role is filled by H160. H161 lines the (S)-2,3,4,5-tetrahydrodipicolinate pocket. The Proton donor role is filled by K164. (S)-2,3,4,5-tetrahydrodipicolinate is bound at residue 170–171 (GT).

The protein belongs to the DapB family.

The protein resides in the cytoplasm. It carries out the reaction (S)-2,3,4,5-tetrahydrodipicolinate + NAD(+) + H2O = (2S,4S)-4-hydroxy-2,3,4,5-tetrahydrodipicolinate + NADH + H(+). The enzyme catalyses (S)-2,3,4,5-tetrahydrodipicolinate + NADP(+) + H2O = (2S,4S)-4-hydroxy-2,3,4,5-tetrahydrodipicolinate + NADPH + H(+). It functions in the pathway amino-acid biosynthesis; L-lysine biosynthesis via DAP pathway; (S)-tetrahydrodipicolinate from L-aspartate: step 4/4. Functionally, catalyzes the conversion of 4-hydroxy-tetrahydrodipicolinate (HTPA) to tetrahydrodipicolinate. The protein is 4-hydroxy-tetrahydrodipicolinate reductase of Methanothermobacter thermautotrophicus (strain ATCC 29096 / DSM 1053 / JCM 10044 / NBRC 100330 / Delta H) (Methanobacterium thermoautotrophicum).